The following is a 279-amino-acid chain: Protease HtpX homolog (279 aa).

2 helical membrane passes run 6 to 26 and 28 to 48; these read TVALMTVLTLLLVWAGGMMGG and GGALFALIMAAVMNLGSYWFS. Histidine 127 is a binding site for Zn(2+). Glutamate 128 is a catalytic residue. Histidine 131 contacts Zn(2+). A run of 2 helical transmembrane segments spans residues 137–157 and 177–197; these read ILIGSIAATIAGAISYLAHMA and LGLLLLIIFAPLAAMLVQMAI. Zn(2+) is bound at residue glutamate 202.

Belongs to the peptidase M48B family. Requires Zn(2+) as cofactor.

It localises to the cell inner membrane. The polypeptide is Protease HtpX homolog (Syntrophotalea carbinolica (strain DSM 2380 / NBRC 103641 / GraBd1) (Pelobacter carbinolicus)).